Reading from the N-terminus, the 467-residue chain is Ribosomal protein uS12 methylthiotransferase RimO (467 aa).

The disordered stretch occupies residues 1–27; sequence MTSNPPDLRPDLAPKPTFGTAPRPDQP. One can recognise an MTTase N-terminal domain in the interval 27–137; that stretch reads PTLGMVSLGC…VLDAVHAAVP (111 aa). Residues Cys36, Cys72, Cys101, Cys168, Cys172, and Cys175 each contribute to the [4Fe-4S] cluster site. One can recognise a Radical SAM core domain in the interval 154-397; the sequence is LTPRHFSYLK…MEKAQAISEA (244 aa). The 68-residue stretch at 400–467 folds into the TRAM domain; the sequence is ASKVGQTLQV…GEYDLWGALR (68 aa).

It belongs to the methylthiotransferase family. RimO subfamily. [4Fe-4S] cluster is required as a cofactor.

The protein localises to the cytoplasm. The enzyme catalyses L-aspartate(89)-[ribosomal protein uS12]-hydrogen + (sulfur carrier)-SH + AH2 + 2 S-adenosyl-L-methionine = 3-methylsulfanyl-L-aspartate(89)-[ribosomal protein uS12]-hydrogen + (sulfur carrier)-H + 5'-deoxyadenosine + L-methionine + A + S-adenosyl-L-homocysteine + 2 H(+). Functionally, catalyzes the methylthiolation of an aspartic acid residue of ribosomal protein uS12. The protein is Ribosomal protein uS12 methylthiotransferase RimO of Ruegeria sp. (strain TM1040) (Silicibacter sp.).